The primary structure comprises 352 residues: Phosphoribosylformylglycinamidine cyclo-ligase (352 aa).

The protein belongs to the AIR synthase family.

Its subcellular location is the cytoplasm. It catalyses the reaction 2-formamido-N(1)-(5-O-phospho-beta-D-ribosyl)acetamidine + ATP = 5-amino-1-(5-phospho-beta-D-ribosyl)imidazole + ADP + phosphate + H(+). It functions in the pathway purine metabolism; IMP biosynthesis via de novo pathway; 5-amino-1-(5-phospho-D-ribosyl)imidazole from N(2)-formyl-N(1)-(5-phospho-D-ribosyl)glycinamide: step 2/2. This Teredinibacter turnerae (strain ATCC 39867 / T7901) protein is Phosphoribosylformylglycinamidine cyclo-ligase.